Consider the following 168-residue polypeptide: Transcription antitermination protein NusB (168 aa).

The protein belongs to the NusB family.

Its function is as follows. Involved in transcription antitermination. Required for transcription of ribosomal RNA (rRNA) genes. Binds specifically to the boxA antiterminator sequence of the ribosomal RNA (rrn) operons. This chain is Transcription antitermination protein NusB, found in Chlamydia trachomatis serovar D (strain ATCC VR-885 / DSM 19411 / UW-3/Cx).